Consider the following 506-residue polypeptide: Peptidyl-prolyl cis-trans isomerase CYP59 (506 aa).

The PPIase cyclophilin-type domain maps to 1–161 (MSVLIVTSLG…KNIRIKHTHI (161 aa)). An RRM domain is found at 243–321 (NVLFVCKLNP…RRIHVDFSQS (79 aa)). Residues 341 to 357 (GCFKCGSTDHIAKDCVG) form a CCHC-type zinc finger. 2 stretches are compositionally biased toward basic and acidic residues: residues 388 to 404 (ETPK…EKIQ) and 412 to 506 (GEGK…RRDR). The segment at 388-506 (ETPKHNSHER…REARHERRDR (119 aa)) is disordered.

This sequence belongs to the cyclophilin-type PPIase family. Component of the BZR1 complex. Interacts with NRPB1 (via CTD domain), SCL28, SCL30, SCL30A, SCL33, SC35, SR30, SR34, RSZ21, RS2Z33, RS31 and RS40. As to expression, ubiquitous.

It localises to the nucleus. It catalyses the reaction [protein]-peptidylproline (omega=180) = [protein]-peptidylproline (omega=0). Functionally, PPIases accelerate the folding of proteins. It catalyzes the cis-trans isomerization of proline imidic peptide bonds in oligopeptides. Influences somehow regulation of RNA pol II (CTD) phosphorylation. Binds RNA with preferences for GC-rich sequences. Probably involved in activities connecting transcription and pre-mRNA processing. Involved in brassinostroid response. This Arabidopsis thaliana (Mouse-ear cress) protein is Peptidyl-prolyl cis-trans isomerase CYP59 (CYP59).